A 482-amino-acid polypeptide reads, in one-letter code: UDP-N-acetylmuramate--L-alanine ligase (482 aa).

123-129 is a binding site for ATP; the sequence is GTHGKTT.

Belongs to the MurCDEF family.

It localises to the cytoplasm. It catalyses the reaction UDP-N-acetyl-alpha-D-muramate + L-alanine + ATP = UDP-N-acetyl-alpha-D-muramoyl-L-alanine + ADP + phosphate + H(+). It participates in cell wall biogenesis; peptidoglycan biosynthesis. Its function is as follows. Cell wall formation. This is UDP-N-acetylmuramate--L-alanine ligase from Pseudomonas putida (strain GB-1).